Consider the following 64-residue polypeptide: DNA gyrase inhibitor YacG (64 aa).

Cys-7, Cys-10, Cys-26, and Cys-30 together coordinate Zn(2+). Positions 44 to 64 (SIPGEPVVIANDDYNNEESDY) are disordered.

This sequence belongs to the DNA gyrase inhibitor YacG family. In terms of assembly, interacts with GyrB. Requires Zn(2+) as cofactor.

In terms of biological role, inhibits all the catalytic activities of DNA gyrase by preventing its interaction with DNA. Acts by binding directly to the C-terminal domain of GyrB, which probably disrupts DNA binding by the gyrase. The protein is DNA gyrase inhibitor YacG of Idiomarina loihiensis (strain ATCC BAA-735 / DSM 15497 / L2-TR).